The chain runs to 131 residues: UPF0102 protein YraN (131 aa).

Over residues 1 to 19 (MATVPTRSGSPRQLTTKQT) the composition is skewed to polar residues. The tract at residues 1-20 (MATVPTRSGSPRQLTTKQTG) is disordered.

Belongs to the UPF0102 family.

This chain is UPF0102 protein YraN, found in Escherichia coli (strain 55989 / EAEC).